A 275-amino-acid polypeptide reads, in one-letter code: Voltage-dependent calcium channel gamma-7 subunit (275 aa).

4 helical membrane passes run alanine 8–valine 28, phenylalanine 103–isoleucine 123, isoleucine 129–leucine 149, and phenylalanine 179–leucine 199. Serine 222, serine 225, and serine 273 each carry phosphoserine.

It belongs to the PMP-22/EMP/MP20 family. CACNG subfamily. As to quaternary structure, interacts with CACNA1C. Identified in a complex with the L-type calcium channel subunits CACNA1C, CACNA2D1 and either CACNB1 or CACNB2. Acts as an auxiliary subunit for AMPA-selective glutamate receptors (AMPARs), such as GRIA1 and GRIA2. In terms of tissue distribution, detected in heart left ventricle. Widely expressed.

It localises to the cell membrane. Its function is as follows. Regulates the activity of L-type calcium channels that contain CACNA1C as pore-forming subunit. Regulates the trafficking and gating properties of AMPA-selective glutamate receptors (AMPARs). Promotes their targeting to the cell membrane and synapses and modulates their gating properties by slowing their rates of activation, deactivation and desensitization and by mediating their resensitization. Displays subunit-specific AMPA receptor regulation. Shows specificity only for GRIA1 and GRIA2. The polypeptide is Voltage-dependent calcium channel gamma-7 subunit (CACNG7) (Homo sapiens (Human)).